A 309-amino-acid polypeptide reads, in one-letter code: Cutinase (309 aa).

The first 47 residues, 1–47, serve as a signal peptide directing secretion; sequence MSALTSQPTSSGSSEKIPRLRGWRAKAAGVVLAALALTTGVAAPAPA. Ser178 serves as the catalytic Nucleophile. Residues Asp224 and His256 each act as charge relay system in the active site. A disulfide bond links Cys289 and Cys305.

The protein belongs to the AB hydrolase superfamily.

It is found in the secreted. It catalyses the reaction a carboxylic ester + H2O = an alcohol + a carboxylate + H(+). The enzyme catalyses a triacylglycerol + H2O = a diacylglycerol + a fatty acid + H(+). The catalysed reaction is 1,2,3-tri-(9Z-octadecenoyl)-glycerol + H2O = di-(9Z)-octadecenoylglycerol + (9Z)-octadecenoate + H(+). It carries out the reaction (6-hydroxyhexanoyl)(n) + H2O = (6-hydroxyhexanoyl)(n-1) + 6-hydroxyhexanoate + H(+). It catalyses the reaction cutin + H2O = cutin monomers.. With respect to regulation, no effect on activity by SDS or chelating agents ethylenediaminetetraacetic acid (EDTA) or sodium citrate. No effect on activity by metal ions Ag(+), Ba(2+), Ca(2+), Co(2+), Cu(2+), Mn(2+), Ni(2+), Pb(2+) or Zn(2+). Activated by 1 mM digitonin and sodium deoxycholate, and reducing agents 1 mM 1,4-dithiothreitol, beta-mercaptoethanol and ascorbic acid. Activated by benzene, n-hexane, p-xylene and toluene. Activated by Fe(3+). Inhibited slightly by 1 mM of different chain length fatty acids, and only marginally by 6.0 M urea. Inhibited strongly with chemical modification by reagents phenyl methyl sulfonylfluorid (PMSF), 1-ethyl-3-(3-dimethylaminopropyl) carbodiimide (EDAC), diethylpyrocarbonate (DEPC) and N-bromosuccinimide (NBS). Inhibited by pyridine, DMSO, t-butanol and dodecane. Inhibited by Li(+), Hg(2+) and Mg(2+). No inhibition with chemical modification by reagents N-acetylimidazole (NAI), citraconic anhydride (CA), iodoacetate (IA) and phenylglyoxal (PG). Catalyzes the hydrolysis of cutin, a polyester that forms the structure of plant cuticle. Shows esterase activity towards p-nitrophenol-linked aliphatic esters (pNP-aliphatic esters). Has a preference for medium chain length (C-4 to C-12) fatty acid esters. Active with p-nitrophenyl palmitate (p-NPP) as substrate. Hydrolyzes triacylglycerol substrates non-specifically with a preference for long, unsaturated fatty acyl chains with the highest activity for triolein. Substrates with cis-9 unsaturation are preferred over the saturated triacylglycerols. Hydrolyzes a wide range of natural oils, especially olive oil, with relatively high activity. Capable of catalyzing synthesis of the flavor ester isoamyl acetate by esterification of isoamyl alcohol using acetic acid as an acyl donor. Degrades synthetic aliphatic polyesters, namely poly(1,4-butylene succinate) extended with 1,6-diisocyanatohexane (PBSc-D) and poly(epsilon-caprolactone) (PCL) plastics. Does not degrade poly(lactic acid) (PLA) nor aromatic poly(ethylene terephthalate) (PET), the most abundant polyester plastic in the world. In Amycolatopsis mediterranei (strain S699) (Nocardia mediterranei), this protein is Cutinase.